Here is a 343-residue protein sequence, read N- to C-terminus: N-acetyl-gamma-glutamyl-phosphate reductase (343 aa).

Cys147 is an active-site residue.

The protein belongs to the NAGSA dehydrogenase family. Type 1 subfamily.

It localises to the cytoplasm. The enzyme catalyses N-acetyl-L-glutamate 5-semialdehyde + phosphate + NADP(+) = N-acetyl-L-glutamyl 5-phosphate + NADPH + H(+). It functions in the pathway amino-acid biosynthesis; L-arginine biosynthesis; N(2)-acetyl-L-ornithine from L-glutamate: step 3/4. In terms of biological role, catalyzes the NADPH-dependent reduction of N-acetyl-5-glutamyl phosphate to yield N-acetyl-L-glutamate 5-semialdehyde. The polypeptide is N-acetyl-gamma-glutamyl-phosphate reductase (Listeria monocytogenes serotype 4b (strain F2365)).